Consider the following 371-residue polypeptide: Phosphatase IMPL1, chloroplastic (371 aa).

Residues 1 to 60 constitute a chloroplast transit peptide; the sequence is MGRSLIFSGNMSLRISHLPRSSLPLQNPISGRTVNRTFRYRCTRILSNSFKSTTRLQTKA. V61 bears the N-acetylvaline mark. Positions 148, 165, 167, and 168 each coordinate Mg(2+). Residue E148 participates in substrate binding. Substrate contacts are provided by residues 167–170, 273–275, E292, and D299; these read LDGT and GAA. D299 contacts Mg(2+).

This sequence belongs to the inositol monophosphatase superfamily. It depends on Mg(2+) as a cofactor. In terms of tissue distribution, ubiquitous. Expressed in pistil and seed endosperm.

The protein resides in the plastid. It is found in the chloroplast stroma. The enzyme catalyses a myo-inositol phosphate + H2O = myo-inositol + phosphate. The protein operates within polyol metabolism; myo-inositol biosynthesis; myo-inositol from D-glucose 6-phosphate: step 2/2. Functionally, phosphatase acting preferentially on D-myoinositol 1-phosphate (D-Ins 1-P). This Arabidopsis thaliana (Mouse-ear cress) protein is Phosphatase IMPL1, chloroplastic (IMPL1).